A 654-amino-acid polypeptide reads, in one-letter code: Bifunctional polymyxin resistance protein ArnA (654 aa).

The interval 1–303 (MKVIVFAYHE…NISRIKGKKL (303 aa)) is formyltransferase ArnAFT. The active-site Proton donor; for formyltransferase activity is H105. 137 to 141 (TKKID) contacts (6R)-10-formyltetrahydrofolate. The interval 313-654 (NLKKILILGV…INFFINNNTS (342 aa)) is dehydrogenase ArnADH. NAD(+) is bound by residues D346 and 367–368 (DI). Residues A392, Y397, and 431–432 (TS) each bind UDP-alpha-D-glucuronate. E433 serves as the catalytic Proton acceptor; for decarboxylase activity. UDP-alpha-D-glucuronate is bound by residues R459, N491, 532–534 (QKR), and Y612. R618 functions as the Proton donor; for decarboxylase activity in the catalytic mechanism.

It in the N-terminal section; belongs to the Fmt family. UDP-L-Ara4N formyltransferase subfamily. This sequence in the C-terminal section; belongs to the NAD(P)-dependent epimerase/dehydratase family. UDP-glucuronic acid decarboxylase subfamily. As to quaternary structure, homohexamer, formed by a dimer of trimers.

The enzyme catalyses UDP-alpha-D-glucuronate + NAD(+) = UDP-beta-L-threo-pentopyranos-4-ulose + CO2 + NADH. The catalysed reaction is UDP-4-amino-4-deoxy-beta-L-arabinose + (6R)-10-formyltetrahydrofolate = UDP-4-deoxy-4-formamido-beta-L-arabinose + (6S)-5,6,7,8-tetrahydrofolate + H(+). It functions in the pathway nucleotide-sugar biosynthesis; UDP-4-deoxy-4-formamido-beta-L-arabinose biosynthesis; UDP-4-deoxy-4-formamido-beta-L-arabinose from UDP-alpha-D-glucuronate: step 1/3. The protein operates within nucleotide-sugar biosynthesis; UDP-4-deoxy-4-formamido-beta-L-arabinose biosynthesis; UDP-4-deoxy-4-formamido-beta-L-arabinose from UDP-alpha-D-glucuronate: step 3/3. It participates in bacterial outer membrane biogenesis; lipopolysaccharide biosynthesis. Bifunctional enzyme that catalyzes the oxidative decarboxylation of UDP-glucuronic acid (UDP-GlcUA) to UDP-4-keto-arabinose (UDP-Ara4O) and the addition of a formyl group to UDP-4-amino-4-deoxy-L-arabinose (UDP-L-Ara4N) to form UDP-L-4-formamido-arabinose (UDP-L-Ara4FN). The modified arabinose is attached to lipid A and is required for resistance to polymyxin and cationic antimicrobial peptides. In Wigglesworthia glossinidia brevipalpis, this protein is Bifunctional polymyxin resistance protein ArnA.